A 176-amino-acid polypeptide reads, in one-letter code: Inorganic pyrophosphatase (176 aa).

Lys-31, Arg-45, and Tyr-57 together coordinate substrate. Mg(2+)-binding residues include Asp-67, Asp-72, and Asp-104. Substrate is bound at residue Tyr-142.

It belongs to the PPase family. Homohexamer. The cofactor is Mg(2+).

It is found in the cytoplasm. It catalyses the reaction diphosphate + H2O = 2 phosphate + H(+). Catalyzes the hydrolysis of inorganic pyrophosphate (PPi) forming two phosphate ions. This chain is Inorganic pyrophosphatase, found in Haemophilus influenzae (strain ATCC 51907 / DSM 11121 / KW20 / Rd).